The following is a 437-amino-acid chain: Epsilon-sarcoglycan (437 aa).

Residues 1–317 (MLLFWWWELG…LKSRDYYTDF (317 aa)) lie on the Extracellular side of the membrane. An N-linked (GlcNAc...) asparagine glycan is attached at N200. A helical transmembrane segment spans residues 318-338 (LVTLAVPSAVALVLFLILAYI). Over 339 to 437 (MCCRREGVEK…QQQTTGKWYP (99 aa)) the chain is Cytoplasmic.

This sequence belongs to the sarcoglycan alpha/epsilon family. N-glycosylated. Post-translationally, ubiquitinated, leading to its degradation by the proteasome. As to expression, in both neural tissues including cerebellar cortex, striatum, cerebral cortex, thalamus and hippocampus, and non-neural tissues including quadriceps muscle, liver, kidney, spleen, lung, testis and heart. Widely distributed in the brain, with a robust signal obtained from regions with dense neuronal packing such as the pyramidal cell layer of the hippocampus, cerebellar molecular layer, and cerebral cortex. Levels are highest in kidney, moderate in brain and lung, and low in skeletal muscle, liver, spleen and testis.

The protein localises to the cell membrane. It localises to the sarcolemma. The protein resides in the cytoplasm. It is found in the cytoskeleton. Its subcellular location is the cell projection. The protein localises to the dendrite. It localises to the golgi apparatus. Functionally, component of the sarcoglycan complex, a subcomplex of the dystrophin-glycoprotein complex which forms a link between the F-actin cytoskeleton and the extracellular matrix. The protein is Epsilon-sarcoglycan of Rattus norvegicus (Rat).